Consider the following 98-residue polypeptide: MSLTYMNMFLAFTISLVGLLMYRSHMMSALLCLEGMMLSLFVMMTITILNIHLTLASMTPIILLVFAACEAALGLSLLVMVSTTYGMDYVQNLNLLQC.

3 helical membrane passes run 1–21 (MSLT…GLLM), 29–49 (ALLC…ITIL), and 61–81 (IILL…LVMV).

Belongs to the complex I subunit 4L family. Core subunit of respiratory chain NADH dehydrogenase (Complex I) which is composed of 45 different subunits.

Its subcellular location is the mitochondrion inner membrane. It carries out the reaction a ubiquinone + NADH + 5 H(+)(in) = a ubiquinol + NAD(+) + 4 H(+)(out). In terms of biological role, core subunit of the mitochondrial membrane respiratory chain NADH dehydrogenase (Complex I) which catalyzes electron transfer from NADH through the respiratory chain, using ubiquinone as an electron acceptor. Part of the enzyme membrane arm which is embedded in the lipid bilayer and involved in proton translocation. The protein is NADH-ubiquinone oxidoreductase chain 4L (MT-ND4L) of Rhinophylla pumilio (Dwarf little fruit bat).